The primary structure comprises 231 residues: DNA mismatch repair protein MutH (231 aa).

Belongs to the MutH family.

The protein localises to the cytoplasm. In terms of biological role, sequence-specific endonuclease that cleaves unmethylated GATC sequences. It is involved in DNA mismatch repair. In Salmonella paratyphi A (strain ATCC 9150 / SARB42), this protein is DNA mismatch repair protein MutH.